The sequence spans 112 residues: Transcriptional regulator WhiD (112 aa).

The 65-residue stretch at 22 to 86 folds into the 4Fe-4S Wbl-type domain; it reads ACRGVDSSLF…GGLTEDEREE (65 aa). Cys23, Cys53, Cys56, and Cys62 together coordinate [4Fe-4S] cluster.

Belongs to the WhiB family. In terms of assembly, the 4Fe-4S form is a monomer; upon oxidation forms a disulfide-bonded homodimer. [4Fe-4S] cluster is required as a cofactor. Post-translationally, can be nitrosylated by NO, 8 NO react per cluster. These complexes are quite stable under anaerobic conditions, but degrade slowly aerobically. Upon Fe-S cluster removal intramolecular disulfide bonds are formed.

It localises to the cytoplasm. Functionally, acts as a transcriptional regulator. Probably redox-responsive. The apo- but not holo-form probably binds DNA. Plays a positive role in prespore maturation and the initiation of sporulation septation. The chain is Transcriptional regulator WhiD (whiD) from Streptomyces coelicolor (strain ATCC BAA-471 / A3(2) / M145).